We begin with the raw amino-acid sequence, 248 residues long: Probable transcriptional regulatory protein Pfl01_4410 (248 aa).

The protein belongs to the TACO1 family.

It localises to the cytoplasm. The sequence is that of Probable transcriptional regulatory protein Pfl01_4410 from Pseudomonas fluorescens (strain Pf0-1).